The following is a 149-amino-acid chain: Transcriptional repressor NrdR (149 aa).

A zinc finger lies at 3 to 34 (CPFCGFEESKVVDSRSTDDNTTIRRRRECLKC). Residues 49–139 (ILVIKKDLTR…VYRQFKDIDT (91 aa)) enclose the ATP-cone domain.

The protein belongs to the NrdR family. It depends on Zn(2+) as a cofactor.

In terms of biological role, negatively regulates transcription of bacterial ribonucleotide reductase nrd genes and operons by binding to NrdR-boxes. This chain is Transcriptional repressor NrdR, found in Clostridium beijerinckii (strain ATCC 51743 / NCIMB 8052) (Clostridium acetobutylicum).